The primary structure comprises 607 residues: Leucine-rich repeat-containing protein 63 (607 aa).

LRR repeat units follow at residues 357–378 (QLVY…VLYL), 380–401 (NLQV…IQQL), 403–424 (YLRK…LFCL), 426–447 (YLEE…IQKL), 449–470 (SLEK…ILKL), 471–497 (NLVK…NPPR), and 498–524 (LTHI…VVQK).

In Rattus norvegicus (Rat), this protein is Leucine-rich repeat-containing protein 63 (Lrrc63).